The following is a 125-amino-acid chain: Small ribosomal subunit protein uS12 (125 aa).

Asp-89 carries the 3-methylthioaspartic acid modification.

It belongs to the universal ribosomal protein uS12 family. Part of the 30S ribosomal subunit. Contacts proteins S8 and S17. May interact with IF1 in the 30S initiation complex.

Functionally, with S4 and S5 plays an important role in translational accuracy. Its function is as follows. Interacts with and stabilizes bases of the 16S rRNA that are involved in tRNA selection in the A site and with the mRNA backbone. Located at the interface of the 30S and 50S subunits, it traverses the body of the 30S subunit contacting proteins on the other side and probably holding the rRNA structure together. The combined cluster of proteins S8, S12 and S17 appears to hold together the shoulder and platform of the 30S subunit. The chain is Small ribosomal subunit protein uS12 from Clostridium kluyveri (strain ATCC 8527 / DSM 555 / NBRC 12016 / NCIMB 10680 / K1).